Reading from the N-terminus, the 357-residue chain is Ribosomal RNA large subunit methyltransferase M (357 aa).

Residues Ser183, 216-219 (APGG), Asp235, Asp255, and Asp271 each bind S-adenosyl-L-methionine. Lys300 serves as the catalytic Proton acceptor.

It belongs to the class I-like SAM-binding methyltransferase superfamily. RNA methyltransferase RlmE family. RlmM subfamily. In terms of assembly, monomer.

The protein resides in the cytoplasm. The enzyme catalyses cytidine(2498) in 23S rRNA + S-adenosyl-L-methionine = 2'-O-methylcytidine(2498) in 23S rRNA + S-adenosyl-L-homocysteine + H(+). In terms of biological role, catalyzes the 2'-O-methylation at nucleotide C2498 in 23S rRNA. This Pseudomonas syringae pv. syringae (strain B728a) protein is Ribosomal RNA large subunit methyltransferase M.